The following is a 311-amino-acid chain: Dihydroorotate dehydrogenase A (fumarate) (311 aa).

FMN contacts are provided by residues Ser19 and 43–44 (KS). Residues Lys43, 67-71 (NSMGL), and Asn127 each bind substrate. Asn127 is a binding site for FMN. Residue Cys130 is the Nucleophile of the active site. FMN is bound by residues Lys164 and Val192. Substrate is bound at residue 193 to 194 (NS). FMN contacts are provided by residues Gly221, 249–250 (GG), and 271–272 (GT).

It belongs to the dihydroorotate dehydrogenase family. Type 1 subfamily. Homodimer. The cofactor is FMN.

It localises to the cytoplasm. The catalysed reaction is (S)-dihydroorotate + fumarate = orotate + succinate. The protein operates within pyrimidine metabolism; UMP biosynthesis via de novo pathway. Functionally, catalyzes the conversion of dihydroorotate to orotate with fumarate as the electron acceptor. The sequence is that of Dihydroorotate dehydrogenase A (fumarate) (pyrDA) from Lactococcus lactis subsp. cremoris (Streptococcus cremoris).